We begin with the raw amino-acid sequence, 360 residues long: Cyclin-dependent kinase 10 (360 aa).

The 285-residue stretch at 39–323 (FEKLNRIGEG…SGDCLESSYF (285 aa)) folds into the Protein kinase domain. Residues 45–53 (IGEGTYGIV) and Lys-68 contribute to the ATP site. The Proton acceptor role is filled by Asp-163. Thr-196 is subject to Phosphothreonine. Positions 334–360 (LMPTFPHHRNKRAAPAAAEGQSKRCRP) are disordered.

This sequence belongs to the protein kinase superfamily. CMGC Ser/Thr protein kinase family. CDC2/CDKX subfamily. Heterodimer with CCNQ, the interaction is required for kinase activity. Interacts with ETS2. Interacts with PRK2.

The protein localises to the cytoplasm. Its subcellular location is the cytoskeleton. It is found in the cilium basal body. The enzyme catalyses L-seryl-[protein] + ATP = O-phospho-L-seryl-[protein] + ADP + H(+). It carries out the reaction L-threonyl-[protein] + ATP = O-phospho-L-threonyl-[protein] + ADP + H(+). Its function is as follows. Cyclin-dependent kinase that phosphorylates the transcription factor ETS2 (in vitro) and positively controls its proteasomal degradation (in cells). Involved in the regulation of actin cytoskeleton organization through the phosphorylation of actin dynamics regulators such as PKN2. Is a negative regulator of ciliogenesis through phosphorylation of PKN2 and promotion of RhoA signaling. This chain is Cyclin-dependent kinase 10 (Cdk10), found in Mus musculus (Mouse).